The chain runs to 432 residues: N-acylneuraminate cytidylyltransferase (432 aa).

Positions 39, 49, 98, 107, 109, and 130 each coordinate substrate. The active site involves R188.

This sequence belongs to the CMP-NeuNAc synthase family. Homotetramer; the active enzyme is formed by a dimer of dimers. Expressed in testis, ovary and liver.

It localises to the nucleus. The enzyme catalyses an N-acylneuraminate + CTP = a CMP-N-acyl-beta-neuraminate + diphosphate. Its pathway is amino-sugar metabolism; N-acetylneuraminate metabolism. Functionally, catalyzes the activation of N-acetylneuraminic acid (NeuNAc) to cytidine 5'-monophosphate N-acetylneuraminic acid (CMP-NeuNAc), a substrate required for the addition of sialic acid. The sequence is that of N-acylneuraminate cytidylyltransferase (cmas) from Oncorhynchus mykiss (Rainbow trout).